The chain runs to 295 residues: Alpha-1A adrenergic receptor (295 aa).

The Extracellular segment spans residues 1–27 (MVFLSGNASDSSNCTHPPAPVNISKAI). N-linked (GlcNAc...) asparagine glycosylation is found at N7, N13, and N22. Residues 28–51 (LLGVILGGLIIFGVLGNILVILSV) traverse the membrane as a helical segment. Residues 52–64 (ACHRHLHSVTHYY) are Cytoplasmic-facing. A helical membrane pass occupies residues 65-88 (IVNLAVADLLLTSTVLPFSAIFEI). The Extracellular portion of the chain corresponds to 89–99 (LGYWAFGRVFC). An intrachain disulfide couples C99 to C176. The helical transmembrane segment at 100-122 (NIWAAVDVLCCTASIMGLCIISI) threads the bilayer. Topologically, residues 123–143 (DRYIGVSYPLRYPTIVTQKRG) are cytoplasmic. The helical transmembrane segment at 144-167 (LMALLCVWALSLVISIGPLFGWRQ) threads the bilayer. The Extracellular segment spans residues 168-181 (PAPEDETICQITEE). A helical transmembrane segment spans residues 182–205 (PGYVLFSALGSFYVPLTIILVMYC). At 206–273 (RVYVVAKRES…FSREKKAAKT (68 aa)) the chain is on the cytoplasmic side. A Phosphoserine; by PKA modification is found at S215. Residues 274 to 295 (LGIVVGCFVLCWLPFFLVMPIG) traverse the membrane as a helical segment.

The protein belongs to the G-protein coupled receptor 1 family. Adrenergic receptor subfamily. ADRA1A sub-subfamily. Homo- and heterooligomer. Heterooligomerizes with ADRA1B homooligomers in cardiac myocytes. Interacts with CAVIN4.

Its subcellular location is the nucleus membrane. It is found in the cell membrane. The protein resides in the cytoplasm. The protein localises to the membrane. It localises to the caveola. This alpha-adrenergic receptor mediates its action by association with G proteins that activate a phosphatidylinositol-calcium second messenger system. Its effect is mediated by G(q) and G(11) proteins. Nuclear ADRA1A-ADRA1B heterooligomers regulate phenylephrine (PE)-stimulated ERK signaling in cardiac myocytes. The protein is Alpha-1A adrenergic receptor (ADRA1A) of Canis lupus familiaris (Dog).